A 397-amino-acid polypeptide reads, in one-letter code: Troponin T, skeletal muscle (397 aa).

A compositionally biased stretch (acidic residues) spans 1 to 16 (MSDDEEYTSSEEEEVV). 3 disordered regions span residues 1–148 (MSDD…NFTI), 234–261 (ERQK…YPPK), and 294–397 (DSNE…EEEE). 3 stretches are compositionally biased toward basic and acidic residues: residues 37 to 77 (EFIK…LKEK), 84 to 129 (TRAE…EKKR), and 136 to 148 (MKDK…NFTI). 2 stretches are compositionally biased toward basic and acidic residues: residues 294–307 (DSNE…KEQY) and 319–329 (FGERPGKKAGE). The segment covering 331 to 397 (ETPEGEEDAK…EEEEEEEEEE (67 aa)) has biased composition (acidic residues).

It belongs to the troponin T family. In terms of processing, some glutamate residues are polyglycylated by TTLL3B. This modification occurs exclusively on glutamate residues and results in polyglycine chains on the gamma-carboxyl group. In terms of tissue distribution, isoform 3 is expressed in the hypoderm. Isoform 8 is expressed in the dorsal vessel. Isoform 6 is expressed in adult TDT muscle and isoform 9 in adult IFM, flight and jump muscles.

Functionally, troponin T is the tropomyosin-binding subunit of troponin, the thin filament regulatory complex which confers calcium-sensitivity to striated muscle actomyosin ATPase activity. The chain is Troponin T, skeletal muscle (up) from Drosophila melanogaster (Fruit fly).